We begin with the raw amino-acid sequence, 429 residues long: Glutamyl-tRNA reductase (429 aa).

Residues 49–52 (TCNR), Ser107, 112–114 (EPQ), and Gln118 each bind substrate. Cys50 acts as the Nucleophile in catalysis. An NADP(+)-binding site is contributed by 187–192 (GAGETI).

Belongs to the glutamyl-tRNA reductase family. In terms of assembly, homodimer.

It catalyses the reaction (S)-4-amino-5-oxopentanoate + tRNA(Glu) + NADP(+) = L-glutamyl-tRNA(Glu) + NADPH + H(+). Its pathway is porphyrin-containing compound metabolism; protoporphyrin-IX biosynthesis; 5-aminolevulinate from L-glutamyl-tRNA(Glu): step 1/2. Catalyzes the NADPH-dependent reduction of glutamyl-tRNA(Glu) to glutamate 1-semialdehyde (GSA). The sequence is that of Glutamyl-tRNA reductase from Pseudomonas fluorescens (strain SBW25).